Reading from the N-terminus, the 32-residue chain is MSDIN-like toxin proprotein 1 (32 aa).

Residues methionine 1 to proline 10 constitute a propeptide that is removed on maturation. A cross-link (cyclopeptide (Ala-Pro)) is located at residues alanine 11 to proline 17. A propeptide spanning residues cysteine 18 to threonine 32 is cleaved from the precursor.

This sequence belongs to the MSDIN fungal toxin family. Post-translationally, processed by the macrocyclase-peptidase enzyme POPB to yield a toxic cyclic heptapeptide. POPB first removes 10 residues from the N-terminus. Conformational trapping of the remaining peptide forces the enzyme to release this intermediate rather than proceed to macrocyclization. The enzyme rebinds the remaining peptide in a different conformation and catalyzes macrocyclization of the N-terminal 7 residues.

Probable toxin that belongs to the MSDIN-like toxin family responsible for a large number of food poisoning cases and deaths. The chain is MSDIN-like toxin proprotein 1 from Amanita fuligineoides.